The primary structure comprises 1452 residues: MAEGYDAALSVAEWLRALHLEQYTALFEQHGLVWATECQGLSDAGLLDMGMHLPGHRRRILAGLHRAHAPPVPLPRPAPRPVPMKRHIFRSPPVPVTPPEPPPTAGEDEGLPAAPPIPPRRSCLPPACFTPTSTAAPDPVLPPLPAKRHLVEPSVPPVPPRTGPPYPQASLLAKEELLLPSVSPRSQPEPAETPSTLLPAFPQGPLQPPSPPPCPPVIPPKPPRLLPEFDDSDYDDVPEEGPGAPASVMTKEEPLPSRVPRAVRVASLLSEGEELSGDDSEDDDDHAYEGIPNGGWPTSGLNPPLRSLIPDLPLHPMDELPGGPTPITPVIKAGWLDKNPPQGSYIYQKRWVRLDADYLRYFDSNKDAYSKRFVPVACICRVAPIGDQKFEVITNNRTFAFRAESDVERNEWMQALQQAVVEHRARFRLSSASVLGVRGSEQPDRAGSLELRGFKNKLYVAVTGDKVQLYKNLEEFHLGIGITFIDMNVGNVKEVDRRSFDLTTPYRIFSFSADSELEKEQWLEAMQGAIAEALSTSEVAERIWAAAPNRFCADCGAAQPDWASINLCVVICKRCAGEHRGLGAGVSKVRSLKMDRKVWTEALIQLFLHLGNGPGNHFWAANVPPSEALEPSSSPGARRYHLEAKYREGKYRRYHPLFGNQEELDKALCAAVTTTDLAETQALLGCGAGVSCFSGDPAAPTPLALAEQAGQTLQMEFLRNNQSTEVPRLDSVKPLEKHYSVTLPTVSHSGFLYKTASAGKPLQDRRAREEFSRRWCVLSDGVLSYYENERAVTPNGEIRASEIVCLAVSPLDTHGFEHTFEVYTEGERLYLFGLENAELAHEWVKCIAKAFVPPLAEDLLARDFERLGRLPCKAGLSLQQAQEGWFALTGSELRAVFPEGPWEEPLQLRKLQELSIQGDSENQVLVLVERRRTLYIQGERRLDFMAWLGVIQKAAASLGDTLSEQQLGDSDIPVIVYRCVDYITQCGLTSEGIYRKCGQTSKTQRLLDSLRQDARSVHLKEGEQHVDDVSSALKRFLRDLPDGLFTRAQRLAWLEASEIEDEEEKISRYRELLVHLPPVNRATVKALISHLYCVQCFSDTNQMNTHNLAIVFGPTLFQTDGQDYKAGKVVEDLINHYVVVFSVDEEELRKQREEVTAIVKMRVAGTASGTQHAGDFICTVYLEEKKVETEQHVKIPASMTAEELTLEILDRRNVSIREKDYWTCFEVNEKEEAERPLHFAEKVLPIVHGLGIDSHLVVKKYQSMEAMLLYLASRVGDTKHGMMKFREDRSLLGLGLPSGGFHDRYFILNSSCLRLYKEVRSQRPWSGAPETSHRPEKEWPVKSLKVYLGVKKKLRPPTCWGFTVVHETEKHEKQQWYLCCDTQMELREWFATFLSVQHDGLVWPSEPSRVSRAVPEVRMGSVSLIPLRGSENEMRRSVAAFTADPLSLLRHV.

The SAM domain occupies 6–70; the sequence is DAALSVAEWL…LAGLHRAHAP (65 aa). The tract at residues 81–90 is required for interaction with SH3KBP1; that stretch reads PVPMKRHIFR. Disordered stretches follow at residues 87-258 and 271-304; these read HIFR…LPSR and EGEE…LNPP. Composition is skewed to pro residues over residues 92 to 104, 154 to 167, and 205 to 225; these read PPVP…PPPT, SVPP…PPYP, and PLQP…PPRL. 2 stretches are compositionally biased toward acidic residues: residues 228–239 and 271–286; these read EFDDSDYDDVPE and EGEE…DDDH. Ser232 is modified (phosphoserine). Tyr234 is modified (phosphotyrosine; by PTK6). The PH 1 domain occupies 329 to 421; the sequence is PVIKAGWLDK…WMQALQQAVV (93 aa). Ser430 carries the phosphoserine modification. The 90-residue stretch at 442 to 531 folds into the PH 2 domain; it reads QPDRAGSLEL…WLEAMQGAIA (90 aa). At Tyr506 the chain carries Phosphotyrosine. The 126-residue stretch at 537 to 662 folds into the Arf-GAP domain; that stretch reads SEVAERIWAA…RYHPLFGNQE (126 aa). Residues 552 to 575 form a C4-type zinc finger; the sequence is CADCGAAQPDWASINLCVVICKRC. At Ser740 the chain carries Phosphoserine. Residues 745-852 form the PH 3 domain; that stretch reads TVSHSGFLYK…WVKCIAKAFV (108 aa). One can recognise a Rho-GAP domain in the interval 956-1141; sequence ASLGDTLSEQ…DLINHYVVVF (186 aa). One can recognise a Ras-associating domain in the interval 1174–1263; it reads GDFICTVYLE…SHLVVKKYQS (90 aa). Positions 1276-1398 constitute a PH 4 domain; the sequence is GDTKHGMMKF…WFATFLSVQH (123 aa). Phosphoserine is present on residues Ser1430 and Ser1437.

Interacts with SH3KBP1/CIN85 (via SH3 domains). The interaction is independent of EGF and does not affect ARAP1 GTPase-activating activity but is involved in regulating ubiquitination and endocytic trafficking of EGFR. ARAP1 competes with E3 ubiquitin-protein ligase CBL for binding to SH3KBP1, preventing interaction of CBL with SH3KBP1; this is likely to regulate SH3KBP1-mediated internalization of EGFR. Interacts with TNFRSF10A. In terms of processing, phosphorylated by PTK6 following EGF stimulation which enhances EGFR signaling by delaying EGFR down-regulation; the interaction is mediated by the SH2 domain of PTK6. Phosphorylation promotes association with the Golgi apparatus and endosomes. As to expression, expressed in the retina where it is detected in Mueller glia (at protein level). Also detected in the retinal pigment epithelium (at protein level). Expressed in osteoclasts (at protein level).

Its subcellular location is the cytoplasm. The protein localises to the golgi apparatus. It is found in the trans-Golgi network. It localises to the golgi stack membrane. The protein resides in the cell membrane. Its subcellular location is the endosome. The protein localises to the multivesicular body. It is found in the cell projection. It localises to the ruffle. The protein resides in the podosome. Its subcellular location is the early endosome. Phosphatidylinositol 3,4,5-trisphosphate-dependent GTPase-activating protein that modulates actin cytoskeleton remodeling by regulating ARF and RHO family members. Activated by phosphatidylinositol 3,4,5-trisphosphate (PtdIns(3,4,5)P3) binding and, to a lesser extent, by phosphatidylinositol 3,4-bisphosphate (PtdIns(3,4)P2) binding. Has a preference for ARF1 and ARF5. Positively regulates the ring size of circular dorsal ruffles and promotes macropinocytosis. Acts as a bridging factor in osteoclasts to control actin and membrane dynamics. Regulates the condensing of osteoclast podosomes into sealing zones which segregate the bone-facing membrane from other membrane domains and are required for osteoclast resorption activity. Also regulates recruitment of the AP-3 complex to endosomal membranes and trafficking of lysosomal membrane proteins to the ruffled membrane border of osteoclasts to modulate bone resorption. Regulates the endocytic trafficking of EGFR. Regulates the incorporation of CD63 and CD9 into multivesicular bodies. Required in the retinal pigment epithelium (RPE) for photoreceptor survival due to its role in promoting RPE phagocytosis. In Mus musculus (Mouse), this protein is Arf-GAP with Rho-GAP domain, ANK repeat and PH domain-containing protein 1.